The primary structure comprises 291 residues: BTB/POZ domain-containing protein 19 (291 aa).

The region spanning 29-98 (SDVCFVVGQE…LYTNSVKLYR (70 aa)) is the BTB domain. In terms of domain architecture, BACK spans 134 to 234 (CEALQVAVTF…LALLAPAELS (101 aa)).

The protein is BTB/POZ domain-containing protein 19 (BTBD19) of Homo sapiens (Human).